A 147-amino-acid chain; its full sequence is Peptide methionine sulfoxide reductase MsrB (147 aa).

The segment covering 1–11 has biased composition (basic and acidic residues); it reads MPKIVKKEPKF. Residues 1-25 are disordered; sequence MPKIVKKEPKFVEQSGKKVTKSDEQ. Positions 23–145 constitute a MsrB domain; the sequence is DEQWREQLSD…NSVSLIFNKS (123 aa). Residues C62, C65, C111, and C114 each coordinate Zn(2+). Residue C134 is the Nucleophile of the active site.

Belongs to the MsrB Met sulfoxide reductase family. Zn(2+) is required as a cofactor.

The enzyme catalyses L-methionyl-[protein] + [thioredoxin]-disulfide + H2O = L-methionyl-(R)-S-oxide-[protein] + [thioredoxin]-dithiol. This Vibrio parahaemolyticus serotype O3:K6 (strain RIMD 2210633) protein is Peptide methionine sulfoxide reductase MsrB.